A 141-amino-acid chain; its full sequence is Cystatin (141 aa).

A signal peptide spans 1-26; it reads MVHSQLPVAAPLRLLCALLLLPSATM. In terms of domain architecture, Cystatin spans 29-129; that stretch reads GGLYPRSVTD…CHFQVWSRPW (101 aa). A Secondary area of contact motif is present at residues 73 to 77; sequence QVVTG. Disulfide bonds link Cys91/Cys107 and Cys120/Cys140.

The protein belongs to the cystatin family. In terms of tissue distribution, expressed by the venom gland at an extremely low level (at protein level).

The protein resides in the secreted. Inhibits various C1 cysteine proteases including cathepsin L, papain and cathepsin B. This protein has no toxic activity and its function in the venom is unknown. It may play a role as a housekeeping or regulatory protein. This Tropidechis carinatus (Australian rough-scaled snake) protein is Cystatin.